A 128-amino-acid polypeptide reads, in one-letter code: Fluoride-specific ion channel FluC (128 aa).

4 helical membrane passes run 6–26 (LVAL…GLVL), 36–56 (LPTF…AGLA), 68–88 (VLLF…GLET), and 99–119 (IAAA…WLGF). Positions 76 and 79 each coordinate Na(+).

This sequence belongs to the fluoride channel Fluc/FEX (TC 1.A.43) family.

It localises to the cell inner membrane. The catalysed reaction is fluoride(in) = fluoride(out). With respect to regulation, na(+) is not transported, but it plays an essential structural role and its presence is essential for fluoride channel function. In terms of biological role, fluoride-specific ion channel. Important for reducing fluoride concentration in the cell, thus reducing its toxicity. This is Fluoride-specific ion channel FluC from Methylobacillus flagellatus (strain ATCC 51484 / DSM 6875 / VKM B-1610 / KT).